Consider the following 365-residue polypeptide: Probable caffeine synthase 4 (365 aa).

An S-adenosyl-L-homocysteine-binding site is contributed by Tyr18. Residue Thr25 coordinates caffeine. S-adenosyl-L-homocysteine contacts are provided by Cys61, Asn66, Asp98, Leu99, Ser134, and Phe135. Residues Tyr152, His155, and Trp156 each contribute to the caffeine site. Positions 173, 259, 261, and 262 each coordinate Mg(2+). Caffeine is bound at residue Phe317.

It belongs to the methyltransferase superfamily. Type-7 methyltransferase family. Requires Mg(2+) as cofactor.

It functions in the pathway alkaloid biosynthesis. May be involved in the biosynthesis of caffeine. This chain is Probable caffeine synthase 4, found in Camellia sinensis (Tea plant).